Here is a 271-residue protein sequence, read N- to C-terminus: uncharacterized protein (271 aa).

This sequence belongs to the metallo-dependent hydrolases superfamily. Peptidase M19 family.

This is an uncharacterized protein from Klebsiella pneumoniae.